The primary structure comprises 248 residues: UPF0736 protein Bcer98_0893 (248 aa).

Belongs to the UPF0736 family.

In Bacillus cytotoxicus (strain DSM 22905 / CIP 110041 / 391-98 / NVH 391-98), this protein is UPF0736 protein Bcer98_0893.